The primary structure comprises 295 residues: Probable intramembrane protease C25B8.17 (295 aa).

Residues 1–21 (MEGVILASSALFTVYIGAKWS) traverse the membrane as a helical segment. Over 22–35 (AQEEEPEEKQLINK) the chain is Cytoplasmic. A helical membrane pass occupies residues 36–56 (RLAVLFPIFGGVTLVLMYLAL). At 57–63 (RYLSKEY) the chain is on the lumenal side. A helical transmembrane segment spans residues 64–84 (IQLILQGYASLASIICFVRSF). Topologically, residues 85 to 89 (NPKTT) are cytoplasmic. The helical transmembrane segment at 90–106 (FGKITATMSSIAIALFY) threads the bilayer. Topologically, residues 107–111 (FKTKH) are lumenal. The chain crosses the membrane as a helical span at residues 112-130 (WMASNILAWALAANSISIM). Over 131-139 (RIDSYNTGA) the chain is Cytoplasmic. A helical membrane pass occupies residues 140 to 160 (LLLGALFFYDIYFVFGTEVMV). Asp149 is an active-site residue. The Lumenal portion of the chain corresponds to 161-183 (TVATGIDIPAKYVLPQFKNPTRL). A helical transmembrane segment spans residues 184 to 204 (SMLGLGDIVMPGLMLALMYRF). Asp190 is an active-site residue. Residues 205–221 (DLHYYINSTSQPKKHST) are Cytoplasmic-facing. A helical transmembrane segment spans residues 222–244 (YFRNTFIAYGLGLGVTNFALYYF). Over 245–249 (KAAQP) the chain is Lumenal. A PAL motif is present at residues 249-251 (PAL). The chain crosses the membrane as a helical span at residues 250–268 (ALLYLSPACIVAPLLTAWY). Over 269 to 295 (RDELKTLFSFRSETEDETDEQDKCKST) the chain is Cytoplasmic.

It belongs to the peptidase A22B family.

It is found in the endoplasmic reticulum membrane. The protein resides in the golgi apparatus membrane. This Schizosaccharomyces pombe (strain 972 / ATCC 24843) (Fission yeast) protein is Probable intramembrane protease C25B8.17.